Here is a 135-residue protein sequence, read N- to C-terminus: Large ribosomal subunit protein uL16c (135 aa).

This sequence belongs to the universal ribosomal protein uL16 family. As to quaternary structure, part of the 50S ribosomal subunit.

It is found in the plastid. The protein localises to the chloroplast. This chain is Large ribosomal subunit protein uL16c, found in Stigeoclonium helveticum (Green alga).